Reading from the N-terminus, the 2209-residue chain is Orsellinic acid synthase armB (2209 aa).

Positions 38 to 261 are N-terminal acylcarrier protein transacylase domain (SAT); the sequence is LLLDACYYAF…HKTTVDALYH (224 aa). Residues 391 to 817 form the Ketosynthase family 3 (KS3) domain; the sequence is QEPIAICGMS…GSNGALLLEE (427 aa). Catalysis depends on for beta-ketoacyl synthase activity residues Cys561, His696, and His736. The segment at 914-1239 is malonyl-CoA:ACP transacylase (MAT) domain; sequence VFVFSGQGGQ…NLTLSSSLSQ (326 aa). Ser1008 serves as the catalytic For acyl/malonyl transferase activity. The interval 1306 to 1436 is N-terminal hotdog fold; sequence MLQSWAQFPS…GQFRPLLVAD (131 aa). Residues 1306–1613 enclose the PKS/mFAS DH domain; the sequence is MLQSWAQFPS…FKKLRLNTLQ (308 aa). The product template (PT) domain stretch occupies residues 1335-1610; the sequence is ITGHIVGDVP…GMCFKKLRLN (276 aa). The Proton acceptor; for dehydratase activity role is filled by His1338. The C-terminal hotdog fold stretch occupies residues 1463–1613; sequence AEVITTRTAY…FKKLRLNTLQ (151 aa). The Proton donor; for dehydratase activity role is filled by Asp1524. 2 Carrier domains span residues 1659–1734 and 1844–1921; these read VDVQ…SSTI and SSSS…SSKQ. O-(pantetheine 4'-phosphoryl)serine occurs at positions 1693 and 1881. The interval 1917–1945 is disordered; sequence ISSKQPGKSPKPSEEATMDPDKEEDLSDL. Over residues 1932–1943 the composition is skewed to acidic residues; the sequence is ATMDPDKEEDLS. A thioesterase (TE) domain region spans residues 1962 to 2201; the sequence is VPMSVQKSSS…LGAVTQALVD (240 aa).

It catalyses the reaction 3 malonyl-CoA + acetyl-CoA + 2 H(+) = orsellinate + 3 CO2 + 4 CoA. It functions in the pathway secondary metabolite biosynthesis. Functionally, non-reducing polyketide synthase, part of the gene cluster that mediates the biosynthesis of melleolides, a range of antifungal and phytotoxic polyketide derivatives composed of an orsellinic acid (OA) moiety esterified to various sesquiterpene alcohols. The first step in melleolides biosynthesis is performed by the delta(6)-protoilludene synthase PRO1 which catalyzes the cyclization of farnesyl diphosphate to protoilludene. The orsellinic acid synthase armB produces OA by condensing acetyl-CoA with 3 malonyl-CoA units in a three-round chain elongation reaction folowed by a C2-C7 ring closure. ArmB further catalyzes the trans-esterification of OA to the various sesquiterpene alcohols resulting from the hydroxylation of protoilludene. The melleolides cluster also includes 5 cytochrome P450 monooxygenases, 4 NAD(+)-dependent oxidoreductases, one flavin-dependent oxidoreductase, and one O-methyltransferase. The cytochrome P450 monooxygenases may be involved in protoilludene hydroxylation to elaborate melleolides with multiple alcohol groups, such as melleolide D, which carries alcohol functionalities at C-4, C-5, C-10, and C-13. The role of the NAD(+)-dependent enzymes remains unknown. Numerous melleolides, including arnamial, show 5'-O-methylation of the aromatic moiety which may be catalyzed by the methyltransferase encoded in the cluster. The flavin-dependent oxidoreductase might represent the dehydrogenase yielding the aldehyde in position 1 of arnamial and other melleolides. Finally, several halogenase localized outside of the cluster (armH1 to armH5), are able to catalyze the transfer of a single chlorine atom to the melleolide backbone, resulting in a 6'-chloromelleolide product. This is Orsellinic acid synthase armB from Armillaria mellea (Honey mushroom).